The primary structure comprises 279 residues: Putative pyruvate, phosphate dikinase regulatory protein (279 aa).

Residue 153-160 (GISRTSKT) participates in ADP binding.

It belongs to the pyruvate, phosphate/water dikinase regulatory protein family. PDRP subfamily.

It carries out the reaction N(tele)-phospho-L-histidyl/L-threonyl-[pyruvate, phosphate dikinase] + ADP = N(tele)-phospho-L-histidyl/O-phospho-L-threonyl-[pyruvate, phosphate dikinase] + AMP + H(+). The enzyme catalyses N(tele)-phospho-L-histidyl/O-phospho-L-threonyl-[pyruvate, phosphate dikinase] + phosphate + H(+) = N(tele)-phospho-L-histidyl/L-threonyl-[pyruvate, phosphate dikinase] + diphosphate. Its function is as follows. Bifunctional serine/threonine kinase and phosphorylase involved in the regulation of the pyruvate, phosphate dikinase (PPDK) by catalyzing its phosphorylation/dephosphorylation. This Bartonella bacilliformis (strain ATCC 35685 / KC583 / Herrer 020/F12,63) protein is Putative pyruvate, phosphate dikinase regulatory protein.